We begin with the raw amino-acid sequence, 128 residues long: uncharacterized protein (128 aa).

This is an uncharacterized protein from Enterobacteria phage T4 (Bacteriophage T4).